The sequence spans 279 residues: Zinc finger CCCH domain-containing protein 42 (279 aa).

Positions 11 to 77 (SDHRSSSTPM…KAAVEPQEYP (67 aa)) are disordered. Low complexity predominate over residues 16–39 (SSTPMATTTSSSASDPAAISPTPS). 3 C3H1-type zinc fingers span residues 79–107 (RPGV…HPAK), 120–148 (RPGE…HPPD), and 186–214 (RPGT…HPNS).

This chain is Zinc finger CCCH domain-containing protein 42, found in Oryza sativa subsp. japonica (Rice).